A 475-amino-acid chain; its full sequence is Probable proline--tRNA ligase, mitochondrial (475 aa).

A mitochondrion-targeting transit peptide spans 1–29; that stretch reads MEGLLTRCRTLSALATCSLRHSRCIVRKC.

It belongs to the class-II aminoacyl-tRNA synthetase family.

The protein localises to the mitochondrion matrix. It carries out the reaction tRNA(Pro) + L-proline + ATP = L-prolyl-tRNA(Pro) + AMP + diphosphate. Functionally, mitochondrial aminoacyl-tRNA synthetase that catalyzes the specific attachment of the proline amino acid (aa) to the homologous transfer RNA (tRNA), further participating in protein synthesis. The reaction occurs in a two steps: proline is first activated by ATP to form Pro-AMP and then transferred to the acceptor end of tRNA(Pro). This Rattus norvegicus (Rat) protein is Probable proline--tRNA ligase, mitochondrial (Pars2).